A 154-amino-acid polypeptide reads, in one-letter code: Cell cycle regulator of non-homologous end joining (154 aa).

Met1 carries the N-acetylmethionine modification. The KBM signature appears at Met1 to Val21. The interval Glu77–Ala144 is disordered. Residues Ala95–Ser105 show a composition bias toward low complexity. An XLM motif is present at residues Ala144 to Ser154.

As to quaternary structure, interacts (via KBM motif) with XRCC5/Ku80 and XRCC6/Ku70 heterodimer. Interacts (via XLF motif) with TRIM28/KAP1, ATM, MRE11, NBN and RAD50. Interacts with splicing factor SF3B1. Interacts with ERCC6L2; this interaction is DNA independent.

It is found in the cytoplasm. It localises to the nucleus. The protein resides in the chromosome. In terms of biological role, cell-cycle-specific regulator of classical non-homologous end joining (NHEJ) of DNA double-strand break (DSB) repair, which can act both as an activator or inhibitor of NHEJ, depending on the cell cycle phase. Acts as a regulator of DNA repair pathway choice by specifically inhibiting classical NHEJ during the S and G2 phases, thereby promoting error-free repair by homologous recombination during cell cycle phases when sister chromatids are present. Preferentially protects single-stranded overhangs at break sites by inhibiting classical NHEJ, thereby creating a local environment that favors homologous recombination. Acts via interaction with XRCC5/Ku80 and XRCC6/Ku70. In contrast, acts as an activator of NHEJ during G1 phase of the cell cycle: promotes classical NHEJ in G1 phase cells via multivalent interactions that increase the affinity of DNA damage response proteins for DSB-associated chromatin. Also involved in immunoglobulin V(D)J recombination. May act as a regulator of proteasome. In case of infection by a retrovirus, may regulate the proteasome during the uncoating phase of retrovirus. The sequence is that of Cell cycle regulator of non-homologous end joining from Cricetulus griseus (Chinese hamster).